A 381-amino-acid chain; its full sequence is L-lactate dehydrogenase (381 aa).

In terms of domain architecture, FMN hydroxy acid dehydrogenase spans 1 to 380 (MIISASTDYR…NRDSLAVSER (380 aa)). Tyrosine 24 serves as a coordination point for substrate. FMN contacts are provided by serine 106 and glutamine 127. Tyrosine 129 contributes to the substrate binding site. FMN is bound at residue threonine 155. A substrate-binding site is contributed by arginine 164. Residue lysine 251 participates in FMN binding. Catalysis depends on histidine 275, which acts as the Proton acceptor. Arginine 278 lines the substrate pocket. 306-330 (DSGIRTGLDVVRMIALGADSVLLGR) lines the FMN pocket.

This sequence belongs to the FMN-dependent alpha-hydroxy acid dehydrogenase family. FMN serves as cofactor.

The protein resides in the cell inner membrane. It catalyses the reaction (S)-lactate + A = pyruvate + AH2. Its function is as follows. Catalyzes the conversion of L-lactate to pyruvate. Is coupled to the respiratory chain. In Yersinia pseudotuberculosis serotype O:1b (strain IP 31758), this protein is L-lactate dehydrogenase.